A 237-amino-acid polypeptide reads, in one-letter code: Octopine transport system permease protein OccQ (237 aa).

Residues 22–222 (TAMTMAVAFS…LITFVSGQVF (201 aa)) enclose the ABC transmembrane type-1 domain. 4 consecutive transmembrane segments (helical) span residues 26-46 (MAVAFSGFTIGLVFGCLGAAA), 72-92 (LVIYLFYFGSSSVISNVASLF), 96-116 (GFVGASTFLIGALAIGVVSGA), and 202-222 (SFYLTAAALYLLITFVSGQVF).

The protein belongs to the binding-protein-dependent transport system permease family. HisMQ subfamily.

It localises to the cell inner membrane. Its function is as follows. Component of the octopine active transport system probably consisting of four subunits: Q, M, P and T. The chain is Octopine transport system permease protein OccQ (occQ) from Agrobacterium tumefaciens (strain Ach5).